The chain runs to 292 residues: Histamine N-methyltransferase (292 aa).

Residue glutamate 28 coordinates substrate. Glycine 60, glutamate 89, glutamine 94, serine 120, and isoleucine 142 together coordinate S-adenosyl-L-methionine. Residue asparagine 283 coordinates substrate.

Belongs to the class I-like SAM-binding methyltransferase superfamily. HNMT family. In terms of assembly, monomer.

The protein localises to the cytoplasm. It catalyses the reaction histamine + S-adenosyl-L-methionine = N(tau)-methylhistamine + S-adenosyl-L-homocysteine + H(+). In terms of biological role, inactivates histamine by N-methylation. Plays an important role in degrading histamine and in regulating the airway response to histamine. The chain is Histamine N-methyltransferase (HNMT) from Homo sapiens (Human).